The sequence spans 130 residues: Sulfurtransferase TusD (130 aa).

Cys80 acts as the Cysteine persulfide intermediate in catalysis.

The protein belongs to the DsrE/TusD family. In terms of assembly, heterohexamer, formed by a dimer of trimers. The hexameric TusBCD complex contains 2 copies each of TusB, TusC and TusD. The TusBCD complex interacts with TusE.

The protein localises to the cytoplasm. In terms of biological role, part of a sulfur-relay system required for 2-thiolation of 5-methylaminomethyl-2-thiouridine (mnm(5)s(2)U) at tRNA wobble positions. Accepts sulfur from TusA and transfers it in turn to TusE. This chain is Sulfurtransferase TusD, found in Sodalis glossinidius (strain morsitans).